We begin with the raw amino-acid sequence, 107 residues long: MMKVLVVVALLVTLISYSSSEGIDDLEADELLSLMANEQTRKECIPKHHECTSNKHGCCRGNFFKYKCRCTTVVTQDGEQTERCFCGTPPHHKAAELVVGFGKKIFG.

The N-terminal stretch at 1–20 (MMKVLVVVALLVTLISYSSS) is a signal peptide. Residues 21 to 41 (EGIDDLEADELLSLMANEQTR) constitute a propeptide that is removed on maturation. 4 disulfide bridges follow: Cys-44–Cys-59, Cys-51–Cys-68, Cys-58–Cys-86, and Cys-70–Cys-84.

The protein belongs to the neurotoxin 19 (CSTX) family. 04 (U1-Lctx) subfamily. In terms of tissue distribution, expressed by the venom gland.

The protein localises to the secreted. The polypeptide is U1-lycotoxin-Ls1a (Lycosa singoriensis (Wolf spider)).